We begin with the raw amino-acid sequence, 399 residues long: Protein TWIN LOV 1 (399 aa).

The region spanning 26–97 is the PAS 1 domain; it reads LWIKEALEEL…MEIREAIREE (72 aa). A PAC 1 domain is found at 98-153; that stretch reads RSVQVSLLNYRKSGSPFWMLFHMCPVFGKDDGKVTNFVAVQVPISGREHHRKKLRN. Positions 249 to 320 constitute a PAS 2 domain; it reads SLVISLGRIK…EMKECILKGQ (72 aa). Position 296 is an S-4a-FMN cysteine (C296). The PAC 2 domain maps to 320 to 376; sequence QSCTVQILNYSNRKDKSSFWNLLHISPVRNASGKTAYFVGVQVEASCRNTEIKELRP.

Interacts with VTC2, VTC5 and BLH10. FMN binds covalently to cysteine after exposure to blue light and is reversed in the dark.

The chain is Protein TWIN LOV 1 (TLP1) from Arabidopsis thaliana (Mouse-ear cress).